A 576-amino-acid polypeptide reads, in one-letter code: Immunoglobulin mu heavy chain (576 aa).

A Pyrrolidone carboxylic acid modification is found at glutamine 1. Ig-like domains follow at residues 1–97 (QVTL…TYYC), 132–212 (PTLF…EHVC), 236–334 (PKVS…QNAS), 352–442 (PSFA…QTIS), and 452–553 (PDVY…RTVD). The variable (V) domain, involved in antigen recognition stretch occupies residues 1 to 124 (QVTLTESGPA…VWGKGTTVTV (124 aa)). Disulfide bonds link cysteine 22/cysteine 97, cysteine 153/cysteine 212, and cysteine 259/cysteine 320. N-linked (GlcNAc...) asparagine glycosylation is found at asparagine 74 and asparagine 170. The interval 125–576 (SSGSASAPTL…VMSDTAGTCY (452 aa)) is constant (C) domain. N-linked (GlcNAc...) asparagine glycosylation is found at asparagine 332, asparagine 395, and asparagine 402. 2 disulfides stabilise this stretch: cysteine 367–cysteine 426 and cysteine 474–cysteine 536. An N-linked (GlcNAc...) asparagine glycan is attached at asparagine 563.

Immunoglobulins are composed of two identical heavy chains and two identical light chains; disulfide-linked. It is found almost exclusively as a homopentamer in the serum. Membrane-bound IgM molecules are non-covalently associated with heterodimer of CD79A and CD79B.

It localises to the secreted. It is found in the cell membrane. In terms of biological role, immunoglobulins, also known as antibodies, are membrane-bound or secreted glycoproteins produced by B lymphocytes. In the recognition phase of humoral immunity, the membrane-bound immunoglobulins serve as receptors which, upon binding of a specific antigen, trigger the clonal expansion and differentiation of B lymphocytes into immunoglobulins-secreting plasma cells. Secreted immunoglobulins mediate the effector phase of humoral immunity, which results in the elimination of bound antigens. The antigen binding site is formed by the variable domain of one heavy chain, together with that of its associated light chain. Thus, each immunoglobulin has two antigen binding sites with remarkable affinity for a particular antigen. The variable domains are assembled by a process called V-(D)-J rearrangement and can then be subjected to somatic hypermutations which, after exposure to antigen and selection, allow affinity maturation for a particular antigen. IgM antibodies play an important role in primary defense mechanisms. They have been shown to be involved in early recognition of external invaders like bacteria and viruses, cellular waste and modified self, as well as in recognition and elimination of precancerous and cancerous lesions. The membrane-bound form is found in the majority of normal B cells alongside with IgD. Membrane-bound IgM induces the phosphorylation of CD79A and CD79B by the Src family of protein tyrosine kinases. It may cause death of cells by apoptosis. It is also found in soluble form, which represents about 30% of the total serum immunoglobulins where it is found almost exclusively as a homopentamer. After the antigen binds to the B cell receptor, the secreted form is secreted in large amounts (, PubMed:16895553). The sequence is that of Immunoglobulin mu heavy chain from Homo sapiens (Human).